The following is a 543-amino-acid chain: Secreted effector protein SptP (543 aa).

Residues 35-139 (TDKAYVAPEK…FINIIKNKDN (105 aa)) are chaperone-binding. The 132-residue stretch at 162–293 (DVGAESKQPL…TAEFEKIKAG (132 aa)) folds into the Bacterial Rho-GAP domain. A Tyrosine-protein phosphatase domain is found at 315–543 (IPINQQTQVK…QAQLLMTTAS (229 aa)). Catalysis depends on Cys-481, which acts as the Phosphocysteine intermediate.

As to quaternary structure, forms a complex with SicP.

It is found in the secreted. It localises to the host cytoplasm. It carries out the reaction O-phospho-L-tyrosyl-[protein] + H2O = L-tyrosyl-[protein] + phosphate. Effector proteins function to alter host cell physiology and promote bacterial survival in host tissues. This protein includes tyrosine phosphatase and GTPase activating protein (GAP) activities. After bacterial internalization, GAP mediates the reversal of the cytoskeletal changes induced by SopE. This function is independent of its tyrosine phosphatase activity, which remains unclear. This chain is Secreted effector protein SptP (sptP), found in Salmonella paratyphi A (strain ATCC 9150 / SARB42).